The primary structure comprises 78 residues: DNA-directed RNA polymerase subunit Rpo5 (78 aa).

It belongs to the archaeal Rpo5/eukaryotic RPB5 RNA polymerase subunit family. In terms of assembly, part of the RNA polymerase complex.

The protein resides in the cytoplasm. It catalyses the reaction RNA(n) + a ribonucleoside 5'-triphosphate = RNA(n+1) + diphosphate. In terms of biological role, DNA-dependent RNA polymerase (RNAP) catalyzes the transcription of DNA into RNA using the four ribonucleoside triphosphates as substrates. This chain is DNA-directed RNA polymerase subunit Rpo5, found in Methanosarcina mazei (strain ATCC BAA-159 / DSM 3647 / Goe1 / Go1 / JCM 11833 / OCM 88) (Methanosarcina frisia).